Here is a 236-residue protein sequence, read N- to C-terminus: 2-C-methyl-D-erythritol 4-phosphate cytidylyltransferase (236 aa).

Belongs to the IspD/TarI cytidylyltransferase family. IspD subfamily. In terms of assembly, homodimer.

The catalysed reaction is 2-C-methyl-D-erythritol 4-phosphate + CTP + H(+) = 4-CDP-2-C-methyl-D-erythritol + diphosphate. Its pathway is isoprenoid biosynthesis; isopentenyl diphosphate biosynthesis via DXP pathway; isopentenyl diphosphate from 1-deoxy-D-xylulose 5-phosphate: step 2/6. Its function is as follows. Catalyzes the formation of 4-diphosphocytidyl-2-C-methyl-D-erythritol from CTP and 2-C-methyl-D-erythritol 4-phosphate (MEP). This chain is 2-C-methyl-D-erythritol 4-phosphate cytidylyltransferase, found in Salmonella paratyphi C (strain RKS4594).